The chain runs to 310 residues: uncharacterized protein (310 aa).

Residue histidine 239 is part of the active site.

The protein belongs to the IUNH family.

It is found in the cytoplasm. The protein localises to the nucleus. This is an uncharacterized protein from Schizosaccharomyces pombe (strain 972 / ATCC 24843) (Fission yeast).